Reading from the N-terminus, the 277-residue chain is Type II restriction enzyme RsrI (277 aa).

The protein belongs to the EcoRI type II restriction endonuclease family. In terms of assembly, homodimer. Mg(2+) serves as cofactor.

It carries out the reaction Endonucleolytic cleavage of DNA to give specific double-stranded fragments with terminal 5'-phosphates.. Its function is as follows. A P subtype restriction enzyme that recognizes the double-stranded sequence 5'-GAATTC-3' and cleaves after G-1. This Cereibacter sphaeroides (Rhodobacter sphaeroides) protein is Type II restriction enzyme RsrI (rsrIR).